The following is a 172-amino-acid chain: Cyclin-L1 (172 aa).

Residues Met-1–Thr-36 are disordered. The segment at Glu-88–Leu-168 is cyclin-like.

It belongs to the cyclin family. Cyclin L subfamily. As to quaternary structure, interacts with POLR2A via its hyperphosphorylated C-terminal domain (CTD). Interacts with CDK11A, CDK11B, CDK12 and CDK13. May form a ternary complex with CDK11B and casein kinase II (CKII). Interacts with pre-mRNA-splicing factors, including at least SRSF1, SRSF2 and SRSF7/SLU7.

The protein resides in the nucleus speckle. It localises to the nucleus. It is found in the nucleoplasm. In terms of biological role, involved in pre-mRNA splicing. Functions in association with cyclin-dependent kinases (CDKs). May play a role in the regulation of RNA polymerase II (pol II). Inhibited by the CDK-specific inhibitor CDKN1A/p21. This is Cyclin-L1 (CCNL1) from Pongo abelii (Sumatran orangutan).